We begin with the raw amino-acid sequence, 159 residues long: Nucleoside diphosphate kinase (159 aa).

ATP-binding residues include K14, F62, R90, T96, and R107. The active-site Pros-phosphohistidine intermediate is H123.

Belongs to the NDK family. It depends on Mg(2+) as a cofactor.

The protein resides in the cytoplasm. The enzyme catalyses a 2'-deoxyribonucleoside 5'-diphosphate + ATP = a 2'-deoxyribonucleoside 5'-triphosphate + ADP. The catalysed reaction is a ribonucleoside 5'-diphosphate + ATP = a ribonucleoside 5'-triphosphate + ADP. Its function is as follows. Major role in the synthesis of nucleoside triphosphates other than ATP. The ATP gamma phosphate is transferred to the NDP beta phosphate via a ping-pong mechanism, using a phosphorylated active-site intermediate. The chain is Nucleoside diphosphate kinase from Pyrococcus abyssi (strain GE5 / Orsay).